Consider the following 140-residue polypeptide: Coiled-coil domain-containing protein 126 (140 aa).

The signal sequence occupies residues 1-35 (MFRTISRKNMSQKLSFLLLVFGLIWGLMLLHYTLQ). Asn-110 is a glycosylation site (N-linked (GlcNAc...) asparagine). Over residues 118–130 (NGTNGNLVPVTTN) the composition is skewed to low complexity. A disordered region spans residues 118-140 (NGTNGNLVPVTTNKRTSVSGSVR). A compositionally biased stretch (polar residues) spans 131 to 140 (KRTSVSGSVR).

It is found in the secreted. The chain is Coiled-coil domain-containing protein 126 (Ccdc126) from Mus musculus (Mouse).